The following is a 379-amino-acid chain: Succinyl-diaminopimelate desuccinylase (379 aa).

Position 70 (H70) interacts with Zn(2+). The active site involves D72. Residue D103 participates in Zn(2+) binding. The Proton acceptor role is filled by E137. 3 residues coordinate Zn(2+): E138, E166, and H352.

The protein belongs to the peptidase M20A family. DapE subfamily. Homodimer. It depends on Zn(2+) as a cofactor. The cofactor is Co(2+).

It carries out the reaction N-succinyl-(2S,6S)-2,6-diaminopimelate + H2O = (2S,6S)-2,6-diaminopimelate + succinate. Its pathway is amino-acid biosynthesis; L-lysine biosynthesis via DAP pathway; LL-2,6-diaminopimelate from (S)-tetrahydrodipicolinate (succinylase route): step 3/3. Its function is as follows. Catalyzes the hydrolysis of N-succinyl-L,L-diaminopimelic acid (SDAP), forming succinate and LL-2,6-diaminopimelate (DAP), an intermediate involved in the bacterial biosynthesis of lysine and meso-diaminopimelic acid, an essential component of bacterial cell walls. This chain is Succinyl-diaminopimelate desuccinylase, found in Paraburkholderia xenovorans (strain LB400).